The chain runs to 717 residues: MRKILRLKVGREDLILETGLLAKQANGAVLATYGGSTVLATVCCSDSVRENLDFVPLSVEYNEKYYAAGKIPGGFIKREGKPKDKEVLVSRLIDRPMRPLFDKRFGREIQVVPTTLSTDQMNPPDIVGMNAAFAAVFLSDIPFNGPIAAVRLAYLNNEFIVNPSFDEIQDSILDIVVAGSLDGITMVEGGANEVSEEVLLSAIDKAYEYIKQICNLQKEFVSIIGEREKLPLAYEEGVFEFKDELKNLIYSELKDACFVKGKLNRDKAIKLVKQKAYEHFSSISQVNEDNEFLFYKAFDDFEREIVRKSILENNLRTDGRTSTQIRDIVAEVDLLKRTHGSSLFTRGETQALAVTTLGTSIDEQIMDDIDGDKRLNFMLHYNFPPFSVGETGRLMTGRREVGHGHLAQRSLEAMLPKKDDFPYTIRVVSEILESNGSSSMATVCSGSMSLMAAGVPVKEQVAGIAMGLISDGDKYVVLSDILGEEDHLGDMDFKVAGTKNGITGFQMDIKISNVTKQLMKDALEQARIGRMHILSIMDSVISRSRDDISVNAPKIVQLQIDIDKISLVIGSTGKTVKAITDEFEVRVQIEQDGRITLFGTDSLKMQKAKAKIESIVREPKIGEIYDGIVKKINSFGAFIELTPIKEGFLSNRARSRDDRYGDMRHSRYGSGRHSRYGRDNRNTFGMNPPRLEEGQIVKVKISDIDKFGKIELELVRD.

Positions 486 and 492 each coordinate Mg(2+). The region spanning 553–612 (PKIVQLQIDIDKISLVIGSTGKTVKAITDEFEVRVQIEQDGRITLFGTDSLKMQKAKAKI) is the KH domain. An S1 motif domain is found at 622–715 (GEIYDGIVKK…KFGKIELELV (94 aa)). The segment at 659–689 (RYGDMRHSRYGSGRHSRYGRDNRNTFGMNPP) is disordered. A compositionally biased stretch (basic residues) spans 666-675 (SRYGSGRHSR).

It belongs to the polyribonucleotide nucleotidyltransferase family. Requires Mg(2+) as cofactor.

It is found in the cytoplasm. The catalysed reaction is RNA(n+1) + phosphate = RNA(n) + a ribonucleoside 5'-diphosphate. In terms of biological role, involved in mRNA degradation. Catalyzes the phosphorolysis of single-stranded polyribonucleotides processively in the 3'- to 5'-direction. This is Polyribonucleotide nucleotidyltransferase from Borrelia hermsii (strain HS1 / DAH).